Reading from the N-terminus, the 450-residue chain is Signal recognition particle protein (450 aa).

Residues 106–113, 188–192, and 246–249 each bind GTP; these read GLQGSGKT, DTAGR, and TKLD.

It belongs to the GTP-binding SRP family. SRP54 subfamily. Part of the signal recognition particle protein translocation system, which is composed of SRP and FtsY.

The protein resides in the cytoplasm. It carries out the reaction GTP + H2O = GDP + phosphate + H(+). Functionally, involved in targeting and insertion of nascent membrane proteins into the cytoplasmic membrane. Binds to the hydrophobic signal sequence of the ribosome-nascent chain (RNC) as it emerges from the ribosomes. The SRP-RNC complex is then targeted to the cytoplasmic membrane where it interacts with the SRP receptor FtsY. This Mycoplasma pneumoniae (strain ATCC 29342 / M129 / Subtype 1) (Mycoplasmoides pneumoniae) protein is Signal recognition particle protein.